The following is a 259-amino-acid chain: MTDPVSRQPTLVIKVGGNELDDATFVKELARIVAAMRPIPTLVHGGGKEIGVLQETLGSAPRFVGGLRYTDATALTAAEMVLCGSVSTRLVAALIVAGADALGISGVDRGLIRVVKQEHPAGDLGRVGRPTAVRSEVLHELLNHDVIPVIAPIALGFDGPYNVNADEAAGAIAAALGADEVVFVTNVPGVLVNGDVMPRLTRHEIEHLIADGTISGGMIPKVRAALTALDAGVRAARITNLEGMLEHGTIIIAEGEVHE.

Substrate is bound by residues 46–47, arginine 68, and asparagine 162; that span reads GG.

This sequence belongs to the acetylglutamate kinase family. ArgB subfamily.

The protein localises to the cytoplasm. The catalysed reaction is N-acetyl-L-glutamate + ATP = N-acetyl-L-glutamyl 5-phosphate + ADP. It functions in the pathway amino-acid biosynthesis; L-arginine biosynthesis; N(2)-acetyl-L-ornithine from L-glutamate: step 2/4. Catalyzes the ATP-dependent phosphorylation of N-acetyl-L-glutamate. This chain is Acetylglutamate kinase, found in Roseiflexus castenholzii (strain DSM 13941 / HLO8).